Consider the following 429-residue polypeptide: Serine hydroxymethyltransferase (429 aa).

Residues Leu-133 and 137 to 139 each bind (6S)-5,6,7,8-tetrahydrofolate; that span reads GHL. Lys-243 is modified (N6-(pyridoxal phosphate)lysine). (6S)-5,6,7,8-tetrahydrofolate is bound at residue Glu-259.

Belongs to the SHMT family. In terms of assembly, homodimer. It depends on pyridoxal 5'-phosphate as a cofactor.

The protein resides in the cytoplasm. The catalysed reaction is (6R)-5,10-methylene-5,6,7,8-tetrahydrofolate + glycine + H2O = (6S)-5,6,7,8-tetrahydrofolate + L-serine. The protein operates within one-carbon metabolism; tetrahydrofolate interconversion. It functions in the pathway amino-acid biosynthesis; glycine biosynthesis; glycine from L-serine: step 1/1. Its function is as follows. Catalyzes the reversible interconversion of serine and glycine with tetrahydrofolate (THF) serving as the one-carbon carrier. This reaction serves as the major source of one-carbon groups required for the biosynthesis of purines, thymidylate, methionine, and other important biomolecules. Also exhibits THF-independent aldolase activity toward beta-hydroxyamino acids, producing glycine and aldehydes, via a retro-aldol mechanism. The polypeptide is Serine hydroxymethyltransferase (Aster yellows witches'-broom phytoplasma (strain AYWB)).